A 469-amino-acid chain; its full sequence is MSEDLSMKCGLEIHVQVDTNSKLFCQCPTNYKDVEPNTNICPVCIGHPGAKPMPPNKKAIDMAIMVAKMLGCEMVIDKDIYFQRKHYNYPDLPSGYQKTSVPIGEHGKFLGVGITEVHLEEDPGQYKPDLGTVDYNRSGTPLIEIVTDPDMKSPEEAREFLRQLLRLFRYIGNLRGEGTMRADTNISIKYNGIQGNRVEVKNVNSIRGVYKVLKYELIRQKNVLRRGGEIKLETRAFMESQMITKGMRSKETADDYRYIPDPDLQPIVLNNEWVEKVEAQMPETPMNKEKRFVEQYGIKEDDAKVLVSDLELADVFEKVVAELGNDKDGISLAVTWIRNELKRVLVYNKLEFFETNLRPEHMVELINSIKDKTISQKIGKTIIEQMVEHKGEKTPKELINEMGLTVIEDTSELEKACEEAIKNSEKAIEDYKSGNQRALNSVVGQVMKLTRGRAEPATVVEILKKKIDG.

Belongs to the GatB/GatE family. GatB subfamily. As to quaternary structure, heterotrimer of A, B and C subunits.

The enzyme catalyses L-glutamyl-tRNA(Gln) + L-glutamine + ATP + H2O = L-glutaminyl-tRNA(Gln) + L-glutamate + ADP + phosphate + H(+). It catalyses the reaction L-aspartyl-tRNA(Asn) + L-glutamine + ATP + H2O = L-asparaginyl-tRNA(Asn) + L-glutamate + ADP + phosphate + 2 H(+). Functionally, allows the formation of correctly charged Asn-tRNA(Asn) or Gln-tRNA(Gln) through the transamidation of misacylated Asp-tRNA(Asn) or Glu-tRNA(Gln) in organisms which lack either or both of asparaginyl-tRNA or glutaminyl-tRNA synthetases. The reaction takes place in the presence of glutamine and ATP through an activated phospho-Asp-tRNA(Asn) or phospho-Glu-tRNA(Gln). This chain is Aspartyl/glutamyl-tRNA(Asn/Gln) amidotransferase subunit B, found in Methanococcus maripaludis (strain C5 / ATCC BAA-1333).